A 192-amino-acid polypeptide reads, in one-letter code: Probable thymidylate kinase (192 aa).

Residue 7–14 (GIDGAGKS) participates in ATP binding.

Belongs to the thymidylate kinase family.

The enzyme catalyses dTMP + ATP = dTDP + ADP. The sequence is that of Probable thymidylate kinase from Methanobrevibacter smithii (strain ATCC 35061 / DSM 861 / OCM 144 / PS).